The sequence spans 461 residues: Cysteine--tRNA ligase (461 aa).

Cysteine 28 provides a ligand contact to Zn(2+). The short motif at 30–40 (ITVYDLCHIGH) is the 'HIGH' region element. 3 residues coordinate Zn(2+): cysteine 209, histidine 234, and glutamate 238. Residues 266–270 (KMSKS) carry the 'KMSKS' region motif. Lysine 269 contributes to the ATP binding site.

Belongs to the class-I aminoacyl-tRNA synthetase family. As to quaternary structure, monomer. It depends on Zn(2+) as a cofactor.

The protein localises to the cytoplasm. The enzyme catalyses tRNA(Cys) + L-cysteine + ATP = L-cysteinyl-tRNA(Cys) + AMP + diphosphate. The polypeptide is Cysteine--tRNA ligase (Escherichia fergusonii (strain ATCC 35469 / DSM 13698 / CCUG 18766 / IAM 14443 / JCM 21226 / LMG 7866 / NBRC 102419 / NCTC 12128 / CDC 0568-73)).